The sequence spans 107 residues: Large ribosomal subunit protein bL21c (107 aa).

This sequence belongs to the bacterial ribosomal protein bL21 family. Part of the 50S ribosomal subunit.

The protein resides in the plastid. It localises to the chloroplast. This protein binds to 23S rRNA. The protein is Large ribosomal subunit protein bL21c of Cyanidioschyzon merolae (strain NIES-3377 / 10D) (Unicellular red alga).